Reading from the N-terminus, the 391-residue chain is Winged helix repair factor 1 (391 aa).

2 stretches are compositionally biased toward low complexity: residues 1 to 24 (MNIKRNQNNSIDNNLSIDSNPSPI) and 49 to 63 (LSFNTSNISNLSNIN). The interval 1 to 95 (MNIKRNQNNS…SITTTTATST (95 aa)) is disordered. Positions 64–74 (GEEDNDDDDRE) are enriched in acidic residues. Low complexity predominate over residues 82–95 (NPNPSITTTTATST).

This sequence belongs to the STK19 family.

It localises to the nucleus. Its function is as follows. DNA-binding protein which is required for efficient transcription-coupled nucleotide excision repair. The polypeptide is Winged helix repair factor 1 (Dictyostelium discoideum (Social amoeba)).